Here is a 329-residue protein sequence, read N- to C-terminus: 4-hydroxythreonine-4-phosphate dehydrogenase (329 aa).

Residues His136 and Thr137 each coordinate substrate. Residues His166, His211, and His266 each contribute to the a divalent metal cation site. Substrate-binding residues include Lys274, Asn283, and Arg292.

The protein belongs to the PdxA family. Homodimer. Zn(2+) serves as cofactor. Requires Mg(2+) as cofactor. The cofactor is Co(2+).

The protein resides in the cytoplasm. It carries out the reaction 4-(phosphooxy)-L-threonine + NAD(+) = 3-amino-2-oxopropyl phosphate + CO2 + NADH. Its pathway is cofactor biosynthesis; pyridoxine 5'-phosphate biosynthesis; pyridoxine 5'-phosphate from D-erythrose 4-phosphate: step 4/5. Its function is as follows. Catalyzes the NAD(P)-dependent oxidation of 4-(phosphooxy)-L-threonine (HTP) into 2-amino-3-oxo-4-(phosphooxy)butyric acid which spontaneously decarboxylates to form 3-amino-2-oxopropyl phosphate (AHAP). This chain is 4-hydroxythreonine-4-phosphate dehydrogenase, found in Neisseria meningitidis serogroup A / serotype 4A (strain DSM 15465 / Z2491).